We begin with the raw amino-acid sequence, 156 residues long: MPRRGYVPKREVLPDPKYQSKLVSKLINVIMEDGKKSISEKICYGAFEIIKEKTGQDPLKVFKQAIENIKPVLEVRPRRVGGATYQVPMEVRPNRRLSLALRWLTTYARQRKEKTMKERLAGEILDAYNNVGSSIKKREETHKMAEANRAFAHYRW.

Belongs to the universal ribosomal protein uS7 family. Part of the 30S ribosomal subunit. Contacts proteins S9 and S11.

Functionally, one of the primary rRNA binding proteins, it binds directly to 16S rRNA where it nucleates assembly of the head domain of the 30S subunit. Is located at the subunit interface close to the decoding center, probably blocks exit of the E-site tRNA. The chain is Small ribosomal subunit protein uS7 from Thermodesulfovibrio yellowstonii (strain ATCC 51303 / DSM 11347 / YP87).